Reading from the N-terminus, the 321-residue chain is Lipoyl synthase (321 aa).

[4Fe-4S] cluster-binding residues include Cys68, Cys73, Cys79, Cys94, Cys98, Cys101, and Ser308. Residues 80-297 form the Radical SAM core domain; it reads FNHGTATFMI…KAEAMAMGFT (218 aa).

The protein belongs to the radical SAM superfamily. Lipoyl synthase family. [4Fe-4S] cluster is required as a cofactor.

It is found in the cytoplasm. The enzyme catalyses [[Fe-S] cluster scaffold protein carrying a second [4Fe-4S](2+) cluster] + N(6)-octanoyl-L-lysyl-[protein] + 2 oxidized [2Fe-2S]-[ferredoxin] + 2 S-adenosyl-L-methionine + 4 H(+) = [[Fe-S] cluster scaffold protein] + N(6)-[(R)-dihydrolipoyl]-L-lysyl-[protein] + 4 Fe(3+) + 2 hydrogen sulfide + 2 5'-deoxyadenosine + 2 L-methionine + 2 reduced [2Fe-2S]-[ferredoxin]. It functions in the pathway protein modification; protein lipoylation via endogenous pathway; protein N(6)-(lipoyl)lysine from octanoyl-[acyl-carrier-protein]: step 2/2. In terms of biological role, catalyzes the radical-mediated insertion of two sulfur atoms into the C-6 and C-8 positions of the octanoyl moiety bound to the lipoyl domains of lipoate-dependent enzymes, thereby converting the octanoylated domains into lipoylated derivatives. The polypeptide is Lipoyl synthase (Klebsiella pneumoniae (strain 342)).